We begin with the raw amino-acid sequence, 66 residues long: Prokaryotic ubiquitin-like protein UBact (66 aa).

Residues 1-66 (MNMRYTLMPE…AERYRQRTGE (66 aa)) form a disordered region. The segment covering 30–66 (GGPRRPETGSPDKDNLLKRMRKVDPKQAERYRQRTGE) has biased composition (basic and acidic residues). Residue Glu66 forms an Isoglutamyl lysine isopeptide (Glu-Lys) (interchain with K-? in acceptor proteins) linkage.

It belongs to the ubiquitin-like protein UBact family.

Functionally, may function as a protein modifier covalently attached to lysine residues of substrate proteins. This may serve to target the modified proteins for degradation by proteasomes. This is Prokaryotic ubiquitin-like protein UBact from Nitrospira moscoviensis.